A 117-amino-acid polypeptide reads, in one-letter code: MVQRLTYRRRLSYNTASNKTRLSRTPGQQDRLPLHQEGRESTYIRMWRVPRQTARGPCCETQVLMRLSKTKKHVSRAYGGSMCAKCVRDRIKRAFLIEEQKIVVKVLKAQAQSQKAK.

A Phosphoserine modification is found at serine 12. A compositionally biased stretch (polar residues) spans 16–28 (ASNKTRLSRTPGQ). Residues 16–35 (ASNKTRLSRTPGQQDRLPLH) form a disordered region. Lysine 108 participates in a covalent cross-link: Glycyl lysine isopeptide (Lys-Gly) (interchain with G-Cter in SUMO2).

This sequence belongs to the eukaryotic ribosomal protein eL34 family. In terms of assembly, component of the large ribosomal subunit.

The protein resides in the cytoplasm. Its subcellular location is the cytosol. It is found in the endoplasmic reticulum. Functionally, component of the large ribosomal subunit. The ribosome is a large ribonucleoprotein complex responsible for the synthesis of proteins in the cell. This is Large ribosomal subunit protein eL34 (RPL34) from Vicugna pacos (Alpaca).